A 174-amino-acid chain; its full sequence is Glycine-rich protein 5 (174 aa).

An N-terminal signal peptide occupies residues Met1–Ala22.

In terms of tissue distribution, mostly expressed in immature seed pods, and, to a lower extent, in stems and leaves. Present in phloem and epiderm in leaves, stems, flowers and fruits.

It localises to the vacuole. Functionally, involved in organ growth by promoting cell elongation processes. The protein is Glycine-rich protein 5 of Arabidopsis thaliana (Mouse-ear cress).